A 916-amino-acid polypeptide reads, in one-letter code: Protein prickle (916 aa).

Disordered stretches follow at residues 49 to 105 (PLSP…AGGS) and 127 to 176 (QHLQ…IPVD). Low complexity predominate over residues 145 to 156 (SSPSPALSSSIT). Gly residues predominate over residues 157-171 (TGGGGVTRGGGGGGH). The PET domain maps to 167–275 (GGGGHIIPVD…TVKQLATNQI (109 aa)). LIM zinc-binding domains are found at residues 274–338 (QICD…ETLK), 339–399 (PRCS…MFAE), and 400–462 (YCDF…GEPP). Disordered stretches follow at residues 460 to 593 (EPPT…PNHR), 635 to 671 (VIPG…QPQS), 692 to 725 (DAIQ…ENLP), and 763 to 870 (RSKS…DTVY). 3 stretches are compositionally biased toward polar residues: residues 507–517 (SPISERSTPHS), 526–569 (EMST…SRTL), and 642–654 (AKTN…SMPE). Over residues 655–671 (LSQSLQQQQQQQQQPQS) the composition is skewed to low complexity. Residues 777 to 793 (RSSKSKRRSSHHHQHHR) are compositionally biased toward basic residues. The segment covering 796 to 805 (GESSSYSGTS) has biased composition (low complexity). Residues 829 to 844 (VPDVEFIEHQDHHRGD) show a composition bias toward basic and acidic residues. Residues 852-867 (RSVCSTCSSSSSSADD) are compositionally biased toward low complexity.

Belongs to the prickle / espinas / testin family. As to quaternary structure, interacts with dsh; PET and LIM domains interact with dsh DEP domain, in wing cells. Interacts with Vang in photoreceptor cells.

It localises to the cell membrane. Acts in a planar cell polarity (PCP) complex; polarization along the apical/basal axis of epithelial cells. PCP signaling in the wing disk requires the receptor fz and the cytoplasmic proteins dsh and pk. These act in a feedback loop leading to activation of the jnk cascade and subsequent polarized arrangement of hairs and bristles. Dgo and pk compete with one another for dsh binding, thereby modulating fz dsh activity and ensuring tight control over fz PCP signaling. Vang, stan and pk function together to regulate the establishment of tissue polarity in the adult eye. This chain is Protein prickle, found in Aedes aegypti (Yellowfever mosquito).